The sequence spans 188 residues: ATP synthase subunit b (188 aa).

The helical transmembrane segment at 7-26 (TAAAGAMTLFFASMAYASGD) threads the bilayer.

Belongs to the ATPase B chain family. As to quaternary structure, F-type ATPases have 2 components, F(1) - the catalytic core - and F(0) - the membrane proton channel. F(1) has five subunits: alpha(3), beta(3), gamma(1), delta(1), epsilon(1). F(0) has three main subunits: a(1), b(2) and c(10-14). The alpha and beta chains form an alternating ring which encloses part of the gamma chain. F(1) is attached to F(0) by a central stalk formed by the gamma and epsilon chains, while a peripheral stalk is formed by the delta and b chains.

Its subcellular location is the cell inner membrane. F(1)F(0) ATP synthase produces ATP from ADP in the presence of a proton or sodium gradient. F-type ATPases consist of two structural domains, F(1) containing the extramembraneous catalytic core and F(0) containing the membrane proton channel, linked together by a central stalk and a peripheral stalk. During catalysis, ATP synthesis in the catalytic domain of F(1) is coupled via a rotary mechanism of the central stalk subunits to proton translocation. Its function is as follows. Component of the F(0) channel, it forms part of the peripheral stalk, linking F(1) to F(0). The polypeptide is ATP synthase subunit b (Nitratidesulfovibrio vulgaris (strain DP4) (Desulfovibrio vulgaris)).